The primary structure comprises 92 residues: MKTLLLTLVVVTIVCLDLGYTRRCFITPDVRSERCPPGQEVCYTKTWCDGFCSSRGKRVDLGCAATCPTPKKKGIDIICCSKDNCNTFPKWP.

An N-terminal signal peptide occupies residues 1–21 (MKTLLLTLVVVTIVCLDLGYT). Intrachain disulfides connect cysteine 24–cysteine 42, cysteine 35–cysteine 63, cysteine 48–cysteine 52, cysteine 67–cysteine 79, and cysteine 80–cysteine 85.

It belongs to the three-finger toxin family. Long-chain subfamily. Type II alpha-neurotoxin sub-subfamily. In terms of tissue distribution, expressed by the venom gland.

It localises to the secreted. Its function is as follows. Binds with high affinity to muscular (alpha-1/CHRNA1) and neuronal (alpha-7/CHRNA7) nicotinic acetylcholine receptor (nAChR) and inhibits acetylcholine from binding to the receptor, thereby impairing neuromuscular and neuronal transmission. This is Long neurotoxin 2 from Oxyuranus microlepidotus (Inland taipan).